The sequence spans 72 residues: MLPLYPDISPEIIAIAIGSGAIGCTIVTDSLFWLVKQYCGATLNETFKYYTTATFIASVVALAGTFLLSFII.

This Escherichia coli O157:H7 protein is Putative D-serine transporter DsdX-like protein (dsdX).